The sequence spans 559 residues: MAASEDGSGCLVSRGRSQSDPSVLTDSSATSSADAGENPDEMDQTPPARPEYLVSGIRTPPVRRNSKLATLGRIFKPWKWRKKKNEKLKQTTSALEKKMAGRQGREELIKKGLLEMMEQDAESKTCNPDGGPRSVQSEPPTPKSETLTSEDAQPGSPLATGTDQVSLDKPLSSAAHLDDAAKMPSASSGEEADAGSLLPTTNELSQALAGADSLDSPPRPLERSVGQLPSPPLLPTPPPKASSKTTKNVTGQATLFQASSMKSADPSLRGQLSTPTGSPHLTTVHRPLPPSRVIEELHRALATKHRQDSFQGRESKGSPKKRLDVRLSRTSSVERGKEREEAWSFDGALENKRTAAKESEENKENLIINSELKDDLLLYQDEEALNDSIISGTLPRKCKKELLAVKLRNRPSKQELEDRNIFPRRTDEERQEIRQQIEMKLSKRLSQRPAVEELERRNILKQRNDQTEQEERREIKQRLTRKLNQRPTVDELRDRKILIRFSDYVEVAKAQDYDRRADKPWTRLSAADKAAIRKELNEYKSNEMEVHASSKHLTRFHRP.

The tract at residues 1–65 is disordered; that stretch reads MAASEDGSGC…GIRTPPVRRN (65 aa). Over residues 15 to 24 the composition is skewed to polar residues; sequence GRSQSDPSVL. Residues 25–35 show a composition bias toward low complexity; the sequence is TDSSATSSADA. A Phosphothreonine modification is found at Thr70. Positions 82–342 are disordered; the sequence is KKKNEKLKQT…VERGKEREEA (261 aa). Residues 93-118 form an RPEL 1 repeat; the sequence is SALEKKMAGRQGREELIKKGLLEMME. Residues 95 to 113 are compositionally biased toward basic and acidic residues; the sequence is LEKKMAGRQGREELIKKGL. Polar residues predominate over residues 134–151; the sequence is SVQSEPPTPKSETLTSED. Residues 229 to 240 show a composition bias toward pro residues; that stretch reads PSPPLLPTPPPK. Ser230 is modified (phosphoserine). At Thr236 the chain carries Phosphothreonine. 2 stretches are compositionally biased toward polar residues: residues 248-262 and 270-281; these read NVTGQATLFQASSMK and GQLSTPTGSPHL. Over residues 293–342 the composition is skewed to basic and acidic residues; that stretch reads VIEELHRALATKHRQDSFQGRESKGSPKKRLDVRLSRTSSVERGKEREEA. A coiled-coil region spans residues 346-369; it reads DGALENKRTAAKESEENKENLIIN. RPEL repeat units lie at residues 401–426, 439–464, and 477–502; these read ELLAVKLRNRPSKQELEDRNIFPRRT, MKLSKRLSQRPAVEELERRNILKQRN, and QRLTRKLNQRPTVDELRDRKILIRFS. The tract at residues 438 to 518 is required for PP1CA binding and inhibition of PP1 activity; that stretch reads EMKLSKRLSQ…KAQDYDRRAD (81 aa). Residues 450 to 486 are a coiled coil; it reads AVEELERRNILKQRNDQTEQEERREIKQRLTRKLNQR.

This sequence belongs to the phosphatase and actin regulator family. Binds actin and PPP1CA; thus inhibiting the protein phosphatase 1 (PP1) activity. As to expression, abundantly expressed in brain. Also found in several tumors such as lung carcinomas, nervous tumors and HL-60 leukemia cells. Isoform 3 is the major form in U-937, GOTO and HL-60 leukemia cells.

The protein resides in the nucleus matrix. This Homo sapiens (Human) protein is Phosphatase and actin regulator 3 (PHACTR3).